A 169-amino-acid chain; its full sequence is ATP synthase subunit b (169 aa).

The chain crosses the membrane as a helical span at residues 11–31; the sequence is IPSFIAQIVNFGLLLGLLYLF.

This sequence belongs to the ATPase B chain family. In terms of assembly, F-type ATPases have 2 components, F(1) - the catalytic core - and F(0) - the membrane proton channel. F(1) has five subunits: alpha(3), beta(3), gamma(1), delta(1), epsilon(1). F(0) has three main subunits: a(1), b(2) and c(10-14). The alpha and beta chains form an alternating ring which encloses part of the gamma chain. F(1) is attached to F(0) by a central stalk formed by the gamma and epsilon chains, while a peripheral stalk is formed by the delta and b chains.

It is found in the cell membrane. Its function is as follows. F(1)F(0) ATP synthase produces ATP from ADP in the presence of a proton or sodium gradient. F-type ATPases consist of two structural domains, F(1) containing the extramembraneous catalytic core and F(0) containing the membrane proton channel, linked together by a central stalk and a peripheral stalk. During catalysis, ATP synthesis in the catalytic domain of F(1) is coupled via a rotary mechanism of the central stalk subunits to proton translocation. Component of the F(0) channel, it forms part of the peripheral stalk, linking F(1) to F(0). This chain is ATP synthase subunit b, found in Dehalococcoides mccartyi (strain ATCC BAA-2100 / JCM 16839 / KCTC 5957 / BAV1).